The chain runs to 607 residues: Potassium transporter KimA (607 aa).

At 1–30 (MYHSIKRFLIGKPLKSQAAGEQKLTKLKAL) the chain is on the cytoplasmic side. Residues 31–49 (AMLSSDALSSVAYGTEQIL) traverse the membrane as a helical segment. Residues Asp-36 and Tyr-43 each contribute to the K(+) site. The Extracellular portion of the chain corresponds to 50 to 62 (IILATISAAAFWY). A helical transmembrane segment spans residues 63-84 (SIPIAVGVLILLLALILSYRQI). Residues 85 to 105 (IYAYPQGGGAYIVSKENLGEK) lie on the Cytoplasmic side of the membrane. Residues 106 to 134 (PGLIAGGSLLVDYILTVAVSISAGTDAIT) traverse the membrane as a helical segment. 2 residues coordinate K(+): Asp-117 and Ser-125. The Extracellular portion of the chain corresponds to 135-142 (SAFPALHD). The chain crosses the membrane as a helical span at residues 143 to 162 (YHVPIAIFLVLVIMILNLRG). Residues 163-166 (LSES) lie on the Cytoplasmic side of the membrane. The helical transmembrane segment at 167 to 190 (ASILAYPVYLFVVALLVLIAVGLF) threads the bilayer. The Extracellular segment spans residues 191-214 (KLMTGQIDQPAHHTSLGTPVAGIT). The chain crosses the membrane as a helical span at residues 215-238 (LFLLLKAFSSGCSALTGVEAISNA). Residues 239–249 (IPAFKNPPARN) lie on the Cytoplasmic side of the membrane. The helical transmembrane segment at 250–271 (AARTLAMMGILLAILFSGITVL) threads the bilayer. The Extracellular portion of the chain corresponds to 272–298 (AYGYGTAPKPDETVVSQIASETFGRNV). A helical transmembrane segment spans residues 299-323 (FYYVIQGVTSLILVLAANTGFSAFP). The Cytoplasmic segment spans residues 324–347 (QLAFNLARDQYMPRMFTVRGDRLG). A helical membrane pass occupies residues 348-366 (FSNGIIFLGFASIVLIILF). Topologically, residues 367–372 (GGQTEH) are extracellular. The chain crosses the membrane as a helical span at residues 373–393 (LIPLYAVGVFIPFTLSQTGMC). Over 394 to 405 (MKWIKQKPKGWI) the chain is Cytoplasmic. The chain crosses the membrane as a helical span at residues 406-428 (GKMLINSCGALISFMVLSILFVT). Residues 429 to 431 (KFN) are Extracellular-facing. Residues 432–447 (VVWPVLIFMPIVVLLF) form a helical membrane-spanning segment. The Cytoplasmic segment spans residues 448-607 (FAIKNHYTAV…VATLPYHFKK (160 aa)).

It belongs to the amino acid-polyamine-organocation (APC) superfamily. Homodimer.

The protein resides in the cell membrane. It catalyses the reaction K(+)(in) + H(+)(in) = K(+)(out) + H(+)(out). Potassium uptake increases at lower external pH and is abolished by the proton ionophore carbonyl cyanide m-chlorophenylhydrazone (CCCP). Binds cyclic di-AMP (c-di-AMP), which inhibits the potassium transport activity. High-affinity potassium transporter. Functions as a K(+)/H(+) symporter. The polypeptide is Potassium transporter KimA (Bacillus subtilis (strain 168)).